The primary structure comprises 197 residues: Protein GrpE (197 aa).

A compositionally biased stretch (basic and acidic residues) spans Met-1–Glu-27. Residues Met-1 to Asn-34 are disordered.

It belongs to the GrpE family. Homodimer.

Its subcellular location is the cytoplasm. Participates actively in the response to hyperosmotic and heat shock by preventing the aggregation of stress-denatured proteins, in association with DnaK and GrpE. It is the nucleotide exchange factor for DnaK and may function as a thermosensor. Unfolded proteins bind initially to DnaJ; upon interaction with the DnaJ-bound protein, DnaK hydrolyzes its bound ATP, resulting in the formation of a stable complex. GrpE releases ADP from DnaK; ATP binding to DnaK triggers the release of the substrate protein, thus completing the reaction cycle. Several rounds of ATP-dependent interactions between DnaJ, DnaK and GrpE are required for fully efficient folding. This Pasteurella multocida (strain Pm70) protein is Protein GrpE.